A 427-amino-acid chain; its full sequence is Glucose-6-phosphate isomerase (427 aa).

Glu281 acts as the Proton donor in catalysis. Residues His302 and Lys417 contribute to the active site.

Belongs to the GPI family.

Its subcellular location is the cytoplasm. The enzyme catalyses alpha-D-glucose 6-phosphate = beta-D-fructose 6-phosphate. It participates in carbohydrate biosynthesis; gluconeogenesis. The protein operates within carbohydrate degradation; glycolysis; D-glyceraldehyde 3-phosphate and glycerone phosphate from D-glucose: step 2/4. Its function is as follows. Catalyzes the reversible isomerization of glucose-6-phosphate to fructose-6-phosphate. The chain is Glucose-6-phosphate isomerase from Mycoplasmopsis pulmonis (strain UAB CTIP) (Mycoplasma pulmonis).